Reading from the N-terminus, the 437-residue chain is Enolase (437 aa).

Gln-162 contacts (2R)-2-phosphoglycerate. The Proton donor role is filled by Glu-204. Positions 251, 297, and 324 each coordinate Mg(2+). Positions 349, 378, 379, and 400 each coordinate (2R)-2-phosphoglycerate. Lys-349 serves as the catalytic Proton acceptor.

The protein belongs to the enolase family. The cofactor is Mg(2+).

It is found in the cytoplasm. The protein localises to the secreted. The protein resides in the cell surface. It catalyses the reaction (2R)-2-phosphoglycerate = phosphoenolpyruvate + H2O. It participates in carbohydrate degradation; glycolysis; pyruvate from D-glyceraldehyde 3-phosphate: step 4/5. Functionally, catalyzes the reversible conversion of 2-phosphoglycerate (2-PG) into phosphoenolpyruvate (PEP). It is essential for the degradation of carbohydrates via glycolysis. The polypeptide is Enolase (Chlorobium phaeovibrioides (strain DSM 265 / 1930) (Prosthecochloris vibrioformis (strain DSM 265))).